The primary structure comprises 175 residues: Large ribosomal subunit protein uL10 (175 aa).

It belongs to the universal ribosomal protein uL10 family. As to quaternary structure, part of the ribosomal stalk of the 50S ribosomal subunit. The N-terminus interacts with L11 and the large rRNA to form the base of the stalk. The C-terminus forms an elongated spine to which L12 dimers bind in a sequential fashion forming a multimeric L10(L12)X complex.

Forms part of the ribosomal stalk, playing a central role in the interaction of the ribosome with GTP-bound translation factors. This Prochlorococcus marinus (strain NATL2A) protein is Large ribosomal subunit protein uL10.